Reading from the N-terminus, the 325-residue chain is Natural cytotoxicity triggering receptor 1 (325 aa).

A signal peptide spans 1–16; sequence MLPTLTALLCLGLCLS. The Extracellular segment spans residues 17 to 258; that stretch reads QRINTEKQTL…WDHTAQNLIR (242 aa). Ig-like domains are found at residues 42 to 100 and 137 to 192; these read GNSV…TCFY and GENV…RCFG. A disulfide bridge links Cys-49 with Cys-98. An N-linked (GlcNAc...) asparagine glycan is attached at Asn-139. An intrachain disulfide couples Cys-144 to Cys-190. Asn-216 carries an N-linked (GlcNAc...) asparagine glycan. A helical transmembrane segment spans residues 259–279; sequence IGLACIIVMALVWLLAEDWLS. The Cytoplasmic segment spans residues 280 to 325; it reads RRKDHEKLNRLTSWECRGRRRMHRYHEEEQRDAISMRELKATPGDM.

The protein belongs to the natural cytotoxicity receptor (NCR) family. Interacts with CD3Z and FCER1G. In terms of tissue distribution, weakly expressed in spleen, heart and lung.

The protein resides in the cell membrane. Cytotoxicity-activating receptor that may contribute to the increased efficiency of activated natural killer (NK) cells to mediate tumor cell lysis. This chain is Natural cytotoxicity triggering receptor 1 (Ncr1), found in Rattus norvegicus (Rat).